We begin with the raw amino-acid sequence, 373 residues long: MEPAVSEPMRDQVARTHLTEDTPKVNADIEKVNQNQAKRCTVIGGSGFLGQHMVEQLLARGYAVNVFDIQQGFDNPQVRFFLGDLCSRQDLYPALKGVNTVFHCASPPPSSNNKELFYRVNYIGTKNVIETCKEAGVQKLILTSSASVIFEGVDIKNGTEDLPYAMKPIDYYTETKILQERAVLGANDPEKNFLTTAIRPHGIFGPRDPQLVPILIEAARNGKMKFVIGNGKNLVDFTFVENVVHGHILAAEQLSRDSTLGGKAFHITNDEPIPFWTFLSRILTGLNYEAPKYHIPYWVAYYLALLLSLLVMVISPVIQLQPTFTPMRVALAGTFHYYSCERAKKAMGYQPLVTMDDAMERTVQSFRHLRRVK.

Met-1 carries the post-translational modification N-acetylmethionine. Residue Thr-22 is modified to Phosphothreonine. Tyr-172 functions as the Proton acceptor in the catalytic mechanism. Position 176 (Lys-176) interacts with NAD(+). The helical transmembrane segment at Trp-298 to Ile-318 threads the bilayer. Positions Arg-370–Lys-373 match the Prevents secretion from ER motif.

Belongs to the 3-beta-HSD family. As to quaternary structure, homodimer. Brain, heart, liver, lung, kidney, skin and placenta.

The protein localises to the endoplasmic reticulum membrane. The protein resides in the lipid droplet. The enzyme catalyses a 3beta-hydroxysteroid-4alpha-carboxylate + NADP(+) = a 3-oxosteroid + CO2 + NADPH. It carries out the reaction a 3beta-hydroxysteroid-4alpha-carboxylate + NAD(+) = a 3-oxosteroid + CO2 + NADH. It catalyses the reaction 4alpha-carboxyzymosterol + NADP(+) = zymosterone + CO2 + NADPH. The catalysed reaction is 4alpha-carboxy-4beta-methyl-5alpha-cholest-8-en-3beta-ol + NADP(+) = 4alpha-methyl-5alpha-cholest-8-en-3-one + CO2 + NADPH. The enzyme catalyses 4alpha-carboxy-5alpha-cholest-8-ene-3beta-ol + NADP(+) = 5alpha-cholest-8-en-3-one + CO2 + NADPH. It carries out the reaction 4beta-methylzymosterol-4alpha-carboxylate + NADP(+) = 3-dehydro-4-methylzymosterol + CO2 + NADPH. It catalyses the reaction 4beta-methylzymosterol-4alpha-carboxylate + NAD(+) = 3-dehydro-4-methylzymosterol + CO2 + NADH. The catalysed reaction is 4alpha-carboxy-5alpha-cholest-8-ene-3beta-ol + NAD(+) = 5alpha-cholest-8-en-3-one + CO2 + NADH. The enzyme catalyses 4alpha-carboxy-4beta-methyl-5alpha-cholest-8-en-3beta-ol + NAD(+) = 4alpha-methyl-5alpha-cholest-8-en-3-one + CO2 + NADH. It carries out the reaction 4alpha-carboxyzymosterol + NAD(+) = zymosterone + CO2 + NADH. Its pathway is steroid biosynthesis; zymosterol biosynthesis; zymosterol from lanosterol: step 4/6. Catalyzes the NAD(P)(+)-dependent oxidative decarboxylation of the C4 methyl groups of 4-alpha-carboxysterols in post-squalene cholesterol biosynthesis. Also plays a role in the regulation of the endocytic trafficking of EGFR. This chain is Sterol-4-alpha-carboxylate 3-dehydrogenase, decarboxylating (NSDHL), found in Homo sapiens (Human).